A 525-amino-acid chain; its full sequence is Acetyl-CoA hydrolase (525 aa).

280-284 (GIGNI) is a CoA binding site. Catalysis depends on E305, which acts as the 5-glutamyl coenzyme A thioester intermediate. The CoA site is built by N395 and G399.

It belongs to the acetyl-CoA hydrolase/transferase family.

It is found in the cytoplasm. It catalyses the reaction acetyl-CoA + H2O = acetate + CoA + H(+). In terms of biological role, required for utilization of acetate. The sequence is that of Acetyl-CoA hydrolase (acu-8) from Neurospora crassa (strain ATCC 24698 / 74-OR23-1A / CBS 708.71 / DSM 1257 / FGSC 987).